Reading from the N-terminus, the 360-residue chain is Phospho-N-acetylmuramoyl-pentapeptide-transferase (360 aa).

The next 10 helical transmembrane spans lie at 24–44 (RAVM…PWTI), 69–89 (GTPT…TLLW), 92–112 (WANP…ALGF), 133–153 (MVWQ…LAAN), 158–178 (ILIV…GFLV), 199–219 (GLAT…AYVS), 239–259 (VAIF…FNAY), 263–283 (VFMG…VAVI), 288–308 (FVLV…MLQV), and 337–357 (QVVV…LSTL).

The protein belongs to the glycosyltransferase 4 family. MraY subfamily. Requires Mg(2+) as cofactor.

The protein localises to the cell inner membrane. The catalysed reaction is UDP-N-acetyl-alpha-D-muramoyl-L-alanyl-gamma-D-glutamyl-meso-2,6-diaminopimeloyl-D-alanyl-D-alanine + di-trans,octa-cis-undecaprenyl phosphate = di-trans,octa-cis-undecaprenyl diphospho-N-acetyl-alpha-D-muramoyl-L-alanyl-D-glutamyl-meso-2,6-diaminopimeloyl-D-alanyl-D-alanine + UMP. The protein operates within cell wall biogenesis; peptidoglycan biosynthesis. Its function is as follows. Catalyzes the initial step of the lipid cycle reactions in the biosynthesis of the cell wall peptidoglycan: transfers peptidoglycan precursor phospho-MurNAc-pentapeptide from UDP-MurNAc-pentapeptide onto the lipid carrier undecaprenyl phosphate, yielding undecaprenyl-pyrophosphoryl-MurNAc-pentapeptide, known as lipid I. In Neisseria meningitidis serogroup C (strain 053442), this protein is Phospho-N-acetylmuramoyl-pentapeptide-transferase.